A 1088-amino-acid polypeptide reads, in one-letter code: Sterol regulatory element-binding protein 2 (1088 aa).

The transcriptional activation (acidic) stretch occupies residues 1–38 (METLTELGDELTLGDIDEMLQFVSNQVGEFPDLFEEQL). Residues 1 to 440 (METLTELGDE…TGLGMMDRSR (440 aa)) lie on the Cytoplasmic side of the membrane. Over residues 59–70 (AAQQPYTTSAPQ) the composition is skewed to polar residues. The tract at residues 59-87 (AAQQPYTTSAPQPQLLPVKAPPQATPQRT) is disordered. Residues 290 to 340 (ERRTTHNIIEKRYRSSINDKIMELKDLVMGTDAKMHKSGVLKKAIDYIKYL) form the bHLH domain. The segment at 340–361 (LQQVNQKLRQENMALKLANQKN) is leucine-zipper. The interval 392 to 431 (SPPASDSGSPAVFSPYSVDSEPGSPLLDDEKVKDEPDSPT) is disordered. Residues 441 to 461 (MLLCTMTFLCLSFNPLTSLLH) form a helical membrane-spanning segment. Residues 462–494 (PESGQYSERAVQHGTGRTMLGVEMSGFYGSWFD) lie on the Lumenal side of the membrane. A helical membrane pass occupies residues 495 to 515 (WLIPTIILWLVNGVIVLSVFM). Over 516-1088 (KLLIHGEPVT…LSGGTAMAAS (573 aa)) the chain is Cytoplasmic.

It belongs to the SREBP family. In terms of assembly, forms a tight complex with scap, the SCAP-SREBP complex, in the endoplasmic reticulum membrane. As to quaternary structure, homodimer; efficient DNA binding of the soluble transcription factor fragment requires dimerization with another bHLH protein. Post-translationally, processed in the Golgi apparatus, releasing the protein from the membrane. At low cholesterol the SCAP-SREBP complex is recruited into COPII vesicles for export from the endoplasmic reticulum. In the Golgi, complex SREBPs are cleaved sequentially by site-1 (MBTPS1, S1P) and site-2 (MBTPS2, S2P) proteases. The first cleavage by site-1 protease occurs within the luminal loop, the second cleavage by site-2 protease occurs within the first transmembrane domain, releasing the transcription factor from the Golgi membrane.

Its subcellular location is the endoplasmic reticulum membrane. The protein localises to the golgi apparatus membrane. It is found in the cytoplasmic vesicle. It localises to the COPII-coated vesicle membrane. The protein resides in the nucleus. Precursor of the transcription factor form (Processed sterol regulatory element-binding protein 2), which is embedded in the endoplasmic reticulum membrane. Low sterol concentrations promote processing of this form, releasing the transcription factor form that translocates into the nucleus and activates transcription of genes involved in cholesterol biosynthesis. Its function is as follows. Key transcription factor that regulates expression of genes involved in cholesterol biosynthesis. Binds to the sterol regulatory element 1 (SRE-1) (5'-ATCACCCCAC-3'). Has dual sequence specificity binding to both an E-box motif (5'-ATCACGTGA-3') and to SRE-1 (5'-ATCACCCCAC-3'). Regulates transcription of genes related to cholesterol synthesis pathway. The polypeptide is Sterol regulatory element-binding protein 2 (Xenopus laevis (African clawed frog)).